The sequence spans 539 residues: O-phosphoserine--tRNA(Cys) ligase (539 aa).

Substrate contacts are provided by residues 188-190 (HMT), 233-235 (SAS), 275-276 (YY), and Asn327.

This sequence belongs to the class-II aminoacyl-tRNA synthetase family. O-phosphoseryl-tRNA(Cys) synthetase subfamily. As to quaternary structure, homotetramer. Interacts with SepCysS.

It catalyses the reaction tRNA(Cys) + O-phospho-L-serine + ATP = O-phospho-L-seryl-tRNA(Cys) + AMP + diphosphate. In terms of biological role, catalyzes the attachment of O-phosphoserine (Sep) to tRNA(Cys). The protein is O-phosphoserine--tRNA(Cys) ligase of Methanosarcina acetivorans (strain ATCC 35395 / DSM 2834 / JCM 12185 / C2A).